A 457-amino-acid polypeptide reads, in one-letter code: Aromatic amino acid permease FywP (457 aa).

Transmembrane regions (helical) follow at residues 16–36 (IVML…SGKV), 43–63 (SVLL…YGVG), 91–111 (FADW…EAGV), 114–134 (FLAI…VAVL), 154–174 (AFIK…LLVI), 205–225 (GFLT…LAAI), 243–263 (GVLI…LHLL), 292–312 (IVLV…IYAT), 342–362 (NAIL…AVLG), 373–393 (ISFT…VLYF), 403–423 (VKLA…MQII), and 424–444 (TNPW…YFSY).

The protein belongs to the amino acid-polyamine-organocation (APC) superfamily. Amino acid transporter (AAT) (TC 2.A.3.1) family.

Its subcellular location is the cell membrane. In terms of biological role, involved in phenylalanine and tyrosine uptake. Also has affinity for tryptophan. Plays no significant role in the excretion of accumulated phenylalanine. The protein is Aromatic amino acid permease FywP of Lactococcus lactis subsp. cremoris (strain MG1363).